Here is a 372-residue protein sequence, read N- to C-terminus: MKAGATSMWASCCGLLNEVMGTGAVRGQQSAFAGATGPFRFTPNPEFSTYPPAATEGPNIVCKACGLSFSVFRKKHVCCDCKKDFCSVCSVLQENLRRCSTCHLLQETAFQRPQLMRLKVKDLRQYLILRNIPIDTCREKEDLVDLVLCHHGLGSEDDMDTSSLNSSRSQTSSFFTRSFFSNYTAPSATMSSFQGELMDGDQTSRSGVPAQVQSEITSANTEDDDDDDDEDDDDEEENAEDRNPGLSKERVRASLSDLSSLDDVEGMSVRQLKEILARNFVNYSGCCEKWELVEKVNRLYKENEENQKSYGERLQLQDEEDDSLCRICMDAVIDCVLLECGHMVTCTKCGKRMSECPICRQYVVRAVHVFKS.

The FYVE-type zinc finger occupies 56–107; it reads EGPNIVCKACGLSFSVFRKKHVCCDCKKDFCSVCSVLQENLRRCSTCHLLQE. The 20-residue stretch at 115–134 folds into the SAP 1 domain; that stretch reads LMRLKVKDLRQYLILRNIPI. The residue at position 169 (Ser169) is a Phosphoserine. The interval 194-253 is disordered; it reads QGELMDGDQTSRSGVPAQVQSEITSANTEDDDDDDDEDDDDEEENAEDRNPGLSKERVRA. The span at 201–220 shows a compositional bias: polar residues; sequence DQTSRSGVPAQVQSEITSAN. Over residues 221–239 the composition is skewed to acidic residues; that stretch reads TEDDDDDDDEDDDDEEENA. Residues 240 to 252 show a composition bias toward basic and acidic residues; it reads EDRNPGLSKERVR. A phosphoserine mark is found at Ser254 and Ser256. The region spanning 264-278 is the SAP 2 domain; that stretch reads VEGMSVRQLKEILAR. The RING-type zinc-finger motif lies at 325-360; the sequence is CRICMDAVIDCVLLECGHMVTCTKCGKRMSECPICR.

As to quaternary structure, interacts with CASP8 and CASP10. Interacts (via RING-type zinc finger) with PPARGC1A. Interacts with NOD1. Interacts with p53/TP53; involved in p53/TP53 ubiquitination. Interacts (via RING-type zinc finger) with MDM2; the interaction stabilizes MDM2. Post-translationally, autoubiquitinated (in vitro). Proteolytically cleaved by caspases upon induction of apoptosis by TNF. Ubiquitous. Detected in heart, brain, liver, skeletal muscle, kidney, pancreas, spleen, thymus, prostate, testis, ovary, colon and leukocytes.

It is found in the cell membrane. Its subcellular location is the endomembrane system. It localises to the nucleus. The protein localises to the nucleus speckle. The protein resides in the cytoplasm. It is found in the cytosol. The catalysed reaction is S-ubiquitinyl-[E2 ubiquitin-conjugating enzyme]-L-cysteine + [acceptor protein]-L-lysine = [E2 ubiquitin-conjugating enzyme]-L-cysteine + N(6)-ubiquitinyl-[acceptor protein]-L-lysine.. The protein operates within protein modification; protein ubiquitination. E3 ubiquitin-protein ligase that regulates several biological processes through the ubiquitin-mediated proteasomal degradation of various target proteins. Ubiquitinates the caspases CASP8 and CASP10, promoting their proteasomal degradation, to negatively regulate cell death downstream of death domain receptors in the extrinsic pathway of apoptosis. May mediate 'Lys-48'-linked polyubiquitination of RIPK1 and its subsequent proteasomal degradation thereby indirectly regulating the tumor necrosis factor-mediated signaling pathway. Negatively regulates p53/TP53 through its direct ubiquitination and targeting to proteasomal degradation. Indirectly, may also negatively regulate p53/TP53 through ubiquitination and degradation of SFN. Mediates PPARGC1A proteasomal degradation probably through ubiquitination thereby indirectly regulating the metabolism of brown fat cells. Possibly involved in innate immunity, through 'Lys-48'-linked polyubiquitination of NOD1 and its subsequent proteasomal degradation. In Homo sapiens (Human), this protein is E3 ubiquitin-protein ligase RNF34.